The sequence spans 359 residues: Peptide chain release factor 1 (359 aa).

Residue Gln-238 is modified to N5-methylglutamine.

It belongs to the prokaryotic/mitochondrial release factor family. In terms of processing, methylated by PrmC. Methylation increases the termination efficiency of RF1.

The protein localises to the cytoplasm. Peptide chain release factor 1 directs the termination of translation in response to the peptide chain termination codons UAG and UAA. This is Peptide chain release factor 1 from Mycoplasmopsis pulmonis (strain UAB CTIP) (Mycoplasma pulmonis).